The sequence spans 124 residues: Small ribosomal subunit protein uS13 (124 aa).

The tract at residues 95 to 124 (GLPVRGQRTHTNARTRKGPRRSVMGKRKKA) is disordered.

Belongs to the universal ribosomal protein uS13 family. Part of the 30S ribosomal subunit. Forms a loose heterodimer with protein S19. Forms two bridges to the 50S subunit in the 70S ribosome.

Its function is as follows. Located at the top of the head of the 30S subunit, it contacts several helices of the 16S rRNA. In the 70S ribosome it contacts the 23S rRNA (bridge B1a) and protein L5 of the 50S subunit (bridge B1b), connecting the 2 subunits; these bridges are implicated in subunit movement. Contacts the tRNAs in the A and P-sites. This chain is Small ribosomal subunit protein uS13, found in Syntrophobacter fumaroxidans (strain DSM 10017 / MPOB).